A 265-amino-acid chain; its full sequence is MIKWPWKVQESAHQTALPWQEALSIPLLTCLTEQEQSKLVTLAERFLQQKRLVPLQGFELDSLRSCRIALLFCLPVLELGLEWLDGFHEVLIYPAPFVVDDEWEDDIGLVHNQRIVQSGQSWQQGPIVLNWLDIQDSFDASGFNLIIHEVAHKLDTRNGDRASGVPFIPLREVAGWEHDLHAAMNNIQEEIELVGDNAASIDAYAASDPAECFAVLSEYFFSAPELFAPRFPSLWQRFCQFYQQDPLQRLHRTNDTDSFSATNVH.

Zn(2+)-binding residues include His-111, His-148, His-152, and Glu-211.

The protein belongs to the MtfA family. In terms of assembly, interacts with Mlc. Requires Zn(2+) as cofactor.

The protein localises to the cytoplasm. Its function is as follows. Involved in the modulation of the activity of the glucose-phosphotransferase system (glucose-PTS). Interacts with the transcriptional repressor Mlc, preventing its interaction with DNA and leading to the modulation of expression of genes regulated by Mlc, including ptsG, which encodes the PTS system glucose-specific EIICB component. In terms of biological role, shows zinc-dependent metallopeptidase activity. The polypeptide is Mlc titration factor A (Escherichia coli (strain SMS-3-5 / SECEC)).